The sequence spans 450 residues: 3',5'-cyclic-AMP phosphodiesterase 7B (450 aa).

Positions 97–420 (LDEDYLGQAR…AQWKSLLPRQ (324 aa)) constitute a PDEase domain. His-173 (proton donor) is an active-site residue. The a divalent metal cation site is built by His-177, His-213, Asp-214, and Asp-323. Residues 418 to 450 (PRQHRSRGSSGSGPDHDHAGQGTESEEQEGDSP) form a disordered region. Phosphoserine is present on Ser-426. The segment covering 441 to 450 (ESEEQEGDSP) has biased composition (acidic residues).

This sequence belongs to the cyclic nucleotide phosphodiesterase family. PDE7 subfamily. It depends on a divalent metal cation as a cofactor. Highly expressed in brain. Also expressed in heart, liver, skeletal muscle and pancreas.

It catalyses the reaction 3',5'-cyclic AMP + H2O = AMP + H(+). It functions in the pathway purine metabolism; 3',5'-cyclic AMP degradation; AMP from 3',5'-cyclic AMP: step 1/1. Inhibited by dipyridamole, IBMX and SCH 51866. Insensitive to zaprinast, rolipram, and milrinone. Functionally, hydrolyzes the second messenger cAMP, which is a key regulator of many important physiological processes. May be involved in the control of cAMP-mediated neural activity and cAMP metabolism in the brain. This chain is 3',5'-cyclic-AMP phosphodiesterase 7B, found in Homo sapiens (Human).